Reading from the N-terminus, the 226-residue chain is Small ribosomal subunit protein uS2c (226 aa).

This sequence belongs to the universal ribosomal protein uS2 family.

It is found in the plastid. The protein localises to the chloroplast. In Phaeodactylum tricornutum (strain CCAP 1055/1), this protein is Small ribosomal subunit protein uS2c (rps2).